The following is a 440-amino-acid chain: tRNA-2-methylthio-N(6)-dimethylallyladenosine synthase (440 aa).

Residues 7 to 123 form the MTTase N-terminal domain; sequence NTFYIHTFGC…LPQLIEQARS (117 aa). [4Fe-4S] cluster-binding residues include Cys-16, Cys-52, Cys-86, Cys-159, Cys-163, and Cys-166. Residues 145–375 form the Radical SAM core domain; sequence RQGSISAFVP…IDLQNTISGE (231 aa). One can recognise a TRAM domain in the interval 378–440; sequence QQAIGSVVEV…TSATLTGRPV (63 aa).

The protein belongs to the methylthiotransferase family. MiaB subfamily. In terms of assembly, monomer. The cofactor is [4Fe-4S] cluster.

It is found in the cytoplasm. The catalysed reaction is N(6)-dimethylallyladenosine(37) in tRNA + (sulfur carrier)-SH + AH2 + 2 S-adenosyl-L-methionine = 2-methylsulfanyl-N(6)-dimethylallyladenosine(37) in tRNA + (sulfur carrier)-H + 5'-deoxyadenosine + L-methionine + A + S-adenosyl-L-homocysteine + 2 H(+). In terms of biological role, catalyzes the methylthiolation of N6-(dimethylallyl)adenosine (i(6)A), leading to the formation of 2-methylthio-N6-(dimethylallyl)adenosine (ms(2)i(6)A) at position 37 in tRNAs that read codons beginning with uridine. The chain is tRNA-2-methylthio-N(6)-dimethylallyladenosine synthase from Pelodictyon phaeoclathratiforme (strain DSM 5477 / BU-1).